Here is a 714-residue protein sequence, read N- to C-terminus: Polyribonucleotide nucleotidyltransferase (714 aa).

Asp488 and Asp494 together coordinate Mg(2+). The region spanning 555–614 (PRIEVMNIPTDKIRDVIGSGGKVIREIVEKTGAKINIEDDGTVKIASSNGKEIEAAKKWI) is the KH domain. An S1 motif domain is found at 624-692 (GEIYEGTVVK…ERGKVRLSMK (69 aa)).

It belongs to the polyribonucleotide nucleotidyltransferase family. Mg(2+) serves as cofactor.

It is found in the cytoplasm. It carries out the reaction RNA(n+1) + phosphate = RNA(n) + a ribonucleoside 5'-diphosphate. Its function is as follows. Involved in mRNA degradation. Catalyzes the phosphorolysis of single-stranded polyribonucleotides processively in the 3'- to 5'-direction. The sequence is that of Polyribonucleotide nucleotidyltransferase from Brucella melitensis biotype 2 (strain ATCC 23457).